A 130-amino-acid polypeptide reads, in one-letter code: Protein ApaG (130 aa).

The 125-residue stretch at 3 to 127 folds into the ApaG domain; it reads RALTRDIEVT…FSLDSPGLMR (125 aa).

In Agrobacterium fabrum (strain C58 / ATCC 33970) (Agrobacterium tumefaciens (strain C58)), this protein is Protein ApaG.